Here is an 83-residue protein sequence, read N- to C-terminus: uncharacterized protein (83 aa).

Residues Arg40–Gly65 are disordered. Polar residues predominate over residues Asn54–Gly65.

This is an uncharacterized protein from Dictyostelium discoideum (Social amoeba).